We begin with the raw amino-acid sequence, 74 residues long: uncharacterized protein (74 aa).

A coiled-coil region spans residues 29 to 63 (LNSKKSALQKDKELQQQAKAQESALAGEELRRRAL).

This is an uncharacterized protein from Pseudoalteromonas phage PM2 (Bacteriophage PM2).